Consider the following 218-residue polypeptide: uncharacterized protein (218 aa).

Residues 1–24 form a disordered region; sequence MAAQPQAPSAGGRPRAGKAVKSVA. The region spanning 28–88 is the HTH tetR-type domain; that stretch reads KLSRESIVEG…AVRIRVIDDI (61 aa). The H-T-H motif DNA-binding region spans 51–70; that stretch reads TINALATQLGTKGPSLYNHV. Residue Thr57 is modified to Phosphothreonine; by PknH.

Post-translationally, phosphorylated on Thr-57 by PknH.

This is an uncharacterized protein from Mycobacterium tuberculosis (strain ATCC 25618 / H37Rv).